Consider the following 441-residue polypeptide: ATP-dependent protease ATPase subunit HslU (441 aa).

Residues I18, 60–65, D254, E319, and R391 contribute to the ATP site; that span reads GVGKTE.

It belongs to the ClpX chaperone family. HslU subfamily. A double ring-shaped homohexamer of HslV is capped on each side by a ring-shaped HslU homohexamer. The assembly of the HslU/HslV complex is dependent on binding of ATP.

It is found in the cytoplasm. Functionally, ATPase subunit of a proteasome-like degradation complex; this subunit has chaperone activity. The binding of ATP and its subsequent hydrolysis by HslU are essential for unfolding of protein substrates subsequently hydrolyzed by HslV. HslU recognizes the N-terminal part of its protein substrates and unfolds these before they are guided to HslV for hydrolysis. The polypeptide is ATP-dependent protease ATPase subunit HslU (Shewanella loihica (strain ATCC BAA-1088 / PV-4)).